The chain runs to 152 residues: Large ribosomal subunit protein bL9 (152 aa).

Belongs to the bacterial ribosomal protein bL9 family.

Its function is as follows. Binds to the 23S rRNA. The protein is Large ribosomal subunit protein bL9 of Synechococcus sp. (strain CC9605).